We begin with the raw amino-acid sequence, 302 residues long: Ornithine carbamoyltransferase (302 aa).

Carbamoyl phosphate contacts are provided by residues 52-55 (STRT), Gln-79, Arg-103, and 130-133 (HPCQ). L-ornithine contacts are provided by residues Asn-161, Asp-222, and 226–227 (SM). Carbamoyl phosphate contacts are provided by residues 262–263 (CL) and Arg-290.

Belongs to the aspartate/ornithine carbamoyltransferase superfamily. OTCase family.

It is found in the cytoplasm. It catalyses the reaction carbamoyl phosphate + L-ornithine = L-citrulline + phosphate + H(+). It participates in amino-acid biosynthesis; L-arginine biosynthesis; L-arginine from L-ornithine and carbamoyl phosphate: step 1/3. Its function is as follows. Reversibly catalyzes the transfer of the carbamoyl group from carbamoyl phosphate (CP) to the N(epsilon) atom of ornithine (ORN) to produce L-citrulline. This chain is Ornithine carbamoyltransferase, found in Syntrophus aciditrophicus (strain SB).